A 156-amino-acid chain; its full sequence is Small ribosomal subunit protein uS7 (156 aa).

It belongs to the universal ribosomal protein uS7 family. In terms of assembly, part of the 30S ribosomal subunit. Contacts proteins S9 and S11.

One of the primary rRNA binding proteins, it binds directly to 16S rRNA where it nucleates assembly of the head domain of the 30S subunit. Is located at the subunit interface close to the decoding center, probably blocks exit of the E-site tRNA. This is Small ribosomal subunit protein uS7 from Rhodopseudomonas palustris (strain BisA53).